The primary structure comprises 507 residues: ATP synthase subunit alpha, chloroplastic (507 aa).

170 to 177 provides a ligand contact to ATP; sequence GDRQTGKT.

The protein belongs to the ATPase alpha/beta chains family. F-type ATPases have 2 components, CF(1) - the catalytic core - and CF(0) - the membrane proton channel. CF(1) has five subunits: alpha(3), beta(3), gamma(1), delta(1), epsilon(1). CF(0) has four main subunits: a, b, b' and c.

It is found in the plastid. The protein resides in the chloroplast thylakoid membrane. It catalyses the reaction ATP + H2O + 4 H(+)(in) = ADP + phosphate + 5 H(+)(out). Functionally, produces ATP from ADP in the presence of a proton gradient across the membrane. The alpha chain is a regulatory subunit. In Marchantia polymorpha (Common liverwort), this protein is ATP synthase subunit alpha, chloroplastic.